We begin with the raw amino-acid sequence, 375 residues long: Acetylornithine aminotransferase (375 aa).

Pyridoxal 5'-phosphate is bound by residues 102–103 (GA) and Phe-129. Position 132 (Arg-132) interacts with N(2)-acetyl-L-ornithine. 214 to 217 (DEVQ) is a binding site for pyridoxal 5'-phosphate. The residue at position 243 (Lys-243) is an N6-(pyridoxal phosphate)lysine. Position 271 (Ser-271) interacts with N(2)-acetyl-L-ornithine. Thr-272 serves as a coordination point for pyridoxal 5'-phosphate.

Belongs to the class-III pyridoxal-phosphate-dependent aminotransferase family. ArgD subfamily. In terms of assembly, homodimer. The cofactor is pyridoxal 5'-phosphate.

It is found in the cytoplasm. The catalysed reaction is N(2)-acetyl-L-ornithine + 2-oxoglutarate = N-acetyl-L-glutamate 5-semialdehyde + L-glutamate. It functions in the pathway amino-acid biosynthesis; L-arginine biosynthesis; N(2)-acetyl-L-ornithine from L-glutamate: step 4/4. The sequence is that of Acetylornithine aminotransferase from Archaeoglobus fulgidus (strain ATCC 49558 / DSM 4304 / JCM 9628 / NBRC 100126 / VC-16).